Reading from the N-terminus, the 128-residue chain is Small ribosomal subunit protein uS11 (128 aa).

It belongs to the universal ribosomal protein uS11 family. Part of the 30S ribosomal subunit. Interacts with proteins S7 and S18. Binds to IF-3.

Its function is as follows. Located on the platform of the 30S subunit, it bridges several disparate RNA helices of the 16S rRNA. Forms part of the Shine-Dalgarno cleft in the 70S ribosome. In Porphyromonas gingivalis (strain ATCC BAA-308 / W83), this protein is Small ribosomal subunit protein uS11.